The chain runs to 330 residues: Putative [LysW]-L-2-aminoadipate/[LysW]-L-glutamate phosphate reductase (330 aa).

NADP(+) is bound by residues 10–13 (SGYI) and 34–36 (SRR). The active site involves C142. Residue N297 coordinates NADP(+).

This sequence belongs to the NAGSA dehydrogenase family. Type 1 subfamily. LysY sub-subfamily.

The protein localises to the cytoplasm. The catalysed reaction is [amino-group carrier protein]-C-terminal-N-(1-carboxy-5-oxopentan-1-yl)-L-glutamine + phosphate + NADP(+) = [amino-group carrier protein]-C-terminal-N-(1-carboxy-5-phosphooxy-5-oxopentan-1-yl)-L-glutamine + NADPH + H(+). It catalyses the reaction [amino-group carrier protein]-C-terminal-gamma-(L-glutamyl-5-semialdehyde)-L-glutamate + phosphate + NADP(+) = [amino-group carrier protein]-C-terminal-gamma-(5-phospho-L-glutamyl)-L-glutamate + NADPH + H(+). It participates in amino-acid biosynthesis; L-lysine biosynthesis via AAA pathway; L-lysine from L-alpha-aminoadipate (Thermus route): step 3/5. Its pathway is amino-acid biosynthesis; L-arginine biosynthesis. Its function is as follows. Involved in both the arginine and lysine biosynthetic pathways. This chain is Putative [LysW]-L-2-aminoadipate/[LysW]-L-glutamate phosphate reductase, found in Thermococcus kodakarensis (strain ATCC BAA-918 / JCM 12380 / KOD1) (Pyrococcus kodakaraensis (strain KOD1)).